A 347-amino-acid polypeptide reads, in one-letter code: MSVMFDPDTAIYPFPPKPTPLSIDEKAYYREKIKRLLKERNAVMVAHYYTDPEIQQLAEETGGCISDSLEMARFGAKHPASTLLVAGVRFMGETAKILSPEKTILMPTLQAECSLDLGCPVEEFNAFCDAHPDRTVVVYANTSAAVKARADWVVTSSIAVELIDHLDSLGEKIIWAPDKHLGRYVQKQTGADILCWQGACIVHDEFKTQALTRLQEEYPDAAILVHPESPQAIVDMADAVGSTSQLIAAAKTLPHQRLIVATDRGIFYKMQQAVPDKELLEAPTAGEGATCRSCAHCPWMAMNGLQAIAEALEQEGSNHEVHVDERLRERALVPLNRMLEFAATLRG.

Positions 47 and 68 each coordinate iminosuccinate. Cysteine 113 is a [4Fe-4S] cluster binding site. Iminosuccinate-binding positions include 139 to 141 (YAN) and serine 156. A [4Fe-4S] cluster-binding site is contributed by cysteine 200. Residues 226–228 (HPE) and threonine 243 each bind iminosuccinate. Residue cysteine 297 participates in [4Fe-4S] cluster binding.

It belongs to the quinolinate synthase family. Type 1 subfamily. [4Fe-4S] cluster is required as a cofactor.

It localises to the cytoplasm. The catalysed reaction is iminosuccinate + dihydroxyacetone phosphate = quinolinate + phosphate + 2 H2O + H(+). Its pathway is cofactor biosynthesis; NAD(+) biosynthesis; quinolinate from iminoaspartate: step 1/1. In terms of biological role, catalyzes the condensation of iminoaspartate with dihydroxyacetone phosphate to form quinolinate. This Escherichia coli O7:K1 (strain IAI39 / ExPEC) protein is Quinolinate synthase.